A 531-amino-acid polypeptide reads, in one-letter code: UPF0159 protein CPn_0746/CP_1126/CPj0746/CpB0774 (531 aa).

2 ThyX domains span residues 38-274 (KGAL…AEPH) and 309-511 (PSVQ…FKFV).

This sequence belongs to the UPF0159 family.

The chain is UPF0159 protein CPn_0746/CP_1126/CPj0746/CpB0774 from Chlamydia pneumoniae (Chlamydophila pneumoniae).